Here is a 763-residue protein sequence, read N- to C-terminus: Eukaryotic translation initiation factor 3 subunit B (763 aa).

The interval 1–136 (MKNFLPRTLK…LFVECGSMND (136 aa)) is sufficient for interaction with HCR1 and TIF32. The interval 28–261 (RNTQLKRSKI…GVTAWGGPNF (234 aa)) is sufficient for interaction with PIC8. S61 carries the phosphoserine modification. Y67 carries the post-translational modification Phosphotyrosine. Positions 77–162 (QYIVVNGAPV…HRLFLYTMKD (86 aa)) constitute an RRM domain. WD repeat units follow at residues 228–266 (RENWSTNYVRFSPKGTYLFSYHQQGVTAWGGPNFDRLRR), 277–325 (VSPN…LMAT), 373–416 (LKPS…SACT), 484–524 (ELKD…IRFY), 544–589 (IPKT…EKNI), and 605–650 (PTYS…VKED). S669 carries the phosphoserine modification.

The protein belongs to the eIF-3 subunit B family. In terms of assembly, the eukaryotic translation initiation factor 3 (eIF-3) core complex is composed of TIF32, PRT1, NIP1, TIF34 and TIF35. A subcomplex of TIF32, NIP1 and PRT1 mediates the interaction with eIF-1, TIF5/eIF-5 and HCR1. The factors eIF-1, eIF-2, eIF-3, TIF5/eIF-5 and methionyl-tRNAi form a multifactor complex (MFC) that may bind to the 40S ribosome.

It localises to the cytoplasm. RNA-binding component of the eukaryotic translation initiation factor 3 (eIF-3) complex, which is involved in protein synthesis of a specialized repertoire of mRNAs and, together with other initiation factors, stimulates binding of mRNA and methionyl-tRNAi to the 40S ribosome. The eIF-3 complex specifically targets and initiates translation of a subset of mRNAs involved in cell proliferation. This Saccharomyces cerevisiae (strain ATCC 204508 / S288c) (Baker's yeast) protein is Eukaryotic translation initiation factor 3 subunit B.